A 534-amino-acid polypeptide reads, in one-letter code: Glucans biosynthesis protein D (534 aa).

The segment at residues 1 to 26 (MQRRDFIRNASLALAAFGLPSLPACA) is a signal peptide (tat-type signal).

The protein belongs to the OpgD/OpgG family. Predicted to be exported by the Tat system. The position of the signal peptide cleavage has not been experimentally proven.

It is found in the periplasm. The protein operates within glycan metabolism; osmoregulated periplasmic glucan (OPG) biosynthesis. In terms of biological role, probably involved in the control of the structural glucose backbone of osmoregulated periplasmic glucans (OPGs). This is Glucans biosynthesis protein D from Stenotrophomonas maltophilia (strain R551-3).